The chain runs to 386 residues: DNA-directed RNA polymerase subunit Rpo1C (386 aa).

It belongs to the RNA polymerase beta' chain family. As to quaternary structure, part of the RNA polymerase complex.

It is found in the cytoplasm. The catalysed reaction is RNA(n) + a ribonucleoside 5'-triphosphate = RNA(n+1) + diphosphate. Functionally, DNA-dependent RNA polymerase (RNAP) catalyzes the transcription of DNA into RNA using the four ribonucleoside triphosphates as substrates. Forms part of the jaw domain. The chain is DNA-directed RNA polymerase subunit Rpo1C from Methanococcus vannielii (strain ATCC 35089 / DSM 1224 / JCM 13029 / OCM 148 / SB).